The chain runs to 443 residues: ATP-dependent protease ATPase subunit HslU (443 aa).

Residues Ile-19, 61-66 (GVGKTE), Asp-256, Glu-321, and Arg-393 each bind ATP.

This sequence belongs to the ClpX chaperone family. HslU subfamily. In terms of assembly, a double ring-shaped homohexamer of HslV is capped on each side by a ring-shaped HslU homohexamer. The assembly of the HslU/HslV complex is dependent on binding of ATP.

It localises to the cytoplasm. ATPase subunit of a proteasome-like degradation complex; this subunit has chaperone activity. The binding of ATP and its subsequent hydrolysis by HslU are essential for unfolding of protein substrates subsequently hydrolyzed by HslV. HslU recognizes the N-terminal part of its protein substrates and unfolds these before they are guided to HslV for hydrolysis. This chain is ATP-dependent protease ATPase subunit HslU, found in Cupriavidus pinatubonensis (strain JMP 134 / LMG 1197) (Cupriavidus necator (strain JMP 134)).